We begin with the raw amino-acid sequence, 244 residues long: tRNA pseudouridine synthase A (244 aa).

D52 functions as the Nucleophile in the catalytic mechanism. Y110 provides a ligand contact to substrate.

The protein belongs to the tRNA pseudouridine synthase TruA family. In terms of assembly, homodimer.

It catalyses the reaction uridine(38/39/40) in tRNA = pseudouridine(38/39/40) in tRNA. Its function is as follows. Formation of pseudouridine at positions 38, 39 and 40 in the anticodon stem and loop of transfer RNAs. This chain is tRNA pseudouridine synthase A, found in Geobacter sulfurreducens (strain ATCC 51573 / DSM 12127 / PCA).